A 503-amino-acid polypeptide reads, in one-letter code: Cytochrome P450 3A43 (503 aa).

Residue Cys-442 participates in heme binding.

The protein belongs to the cytochrome P450 family. Requires heme as cofactor. In terms of tissue distribution, highest expression level in prostate. Also expressed in liver, kidney, pancreas, fetal liver and fetal skeletal muscle.

It is found in the endoplasmic reticulum membrane. The protein resides in the microsome membrane. The enzyme catalyses an organic molecule + reduced [NADPH--hemoprotein reductase] + O2 = an alcohol + oxidized [NADPH--hemoprotein reductase] + H2O + H(+). In terms of biological role, exhibits low testosterone 6-beta-hydroxylase activity. In Homo sapiens (Human), this protein is Cytochrome P450 3A43 (CYP3A43).